Consider the following 91-residue polypeptide: Acylphosphatase (91 aa).

The Acylphosphatase-like domain maps to 3-91; that stretch reads CLKAVVKGKV…GNYGDFHIKY (89 aa). Active-site residues include Arg-18 and Asn-36.

Belongs to the acylphosphatase family.

The catalysed reaction is an acyl phosphate + H2O = a carboxylate + phosphate + H(+). This Dehalococcoides mccartyi (strain ATCC BAA-2266 / KCTC 15142 / 195) (Dehalococcoides ethenogenes (strain 195)) protein is Acylphosphatase (acyP).